The following is a 208-amino-acid chain: Urease accessory protein UreE (208 aa).

A disordered region spans residues 145–195; sequence AEAHGHGQAHAHDHHDHDHHDHGHDHAHHDHAHHDHAHDHHGHDHAHDHAH.

This sequence belongs to the UreE family.

It is found in the cytoplasm. Involved in urease metallocenter assembly. Binds nickel. Probably functions as a nickel donor during metallocenter assembly. The polypeptide is Urease accessory protein UreE (Azorhizobium caulinodans (strain ATCC 43989 / DSM 5975 / JCM 20966 / LMG 6465 / NBRC 14845 / NCIMB 13405 / ORS 571)).